The sequence spans 312 residues: Ribonuclease Z (312 aa).

The Zn(2+) site is built by His62, His64, Asp66, His67, His144, Asp215, and His273. Asp66 (proton acceptor) is an active-site residue.

Belongs to the RNase Z family. As to quaternary structure, homodimer. Requires Zn(2+) as cofactor.

It catalyses the reaction Endonucleolytic cleavage of RNA, removing extra 3' nucleotides from tRNA precursor, generating 3' termini of tRNAs. A 3'-hydroxy group is left at the tRNA terminus and a 5'-phosphoryl group is left at the trailer molecule.. Zinc phosphodiesterase, which displays some tRNA 3'-processing endonuclease activity. Probably involved in tRNA maturation, by removing a 3'-trailer from precursor tRNA. This is Ribonuclease Z from Prochlorococcus marinus subsp. pastoris (strain CCMP1986 / NIES-2087 / MED4).